Consider the following 30-residue polypeptide: Beta-endorphin-2 (30 aa).

Tyrosine 1 is subject to N-acetyltyrosine.

Belongs to the POMC family.

The protein localises to the secreted. In Oncorhynchus keta (Chum salmon), this protein is Beta-endorphin-2.